We begin with the raw amino-acid sequence, 94 residues long: Large ribosomal subunit protein uL23 (94 aa).

Belongs to the universal ribosomal protein uL23 family. Part of the 50S ribosomal subunit. Contacts protein L29, and trigger factor when it is bound to the ribosome.

Functionally, one of the early assembly proteins it binds 23S rRNA. One of the proteins that surrounds the polypeptide exit tunnel on the outside of the ribosome. Forms the main docking site for trigger factor binding to the ribosome. The sequence is that of Large ribosomal subunit protein uL23 from Roseiflexus castenholzii (strain DSM 13941 / HLO8).